Reading from the N-terminus, the 571-residue chain is Urease subunit alpha (571 aa).

One can recognise a Urease domain in the interval 133–571 (GGVDSHIHFI…LPLAQRYFLF (439 aa)). Residues His-138, His-140, and Lys-221 each contribute to the Ni(2+) site. Lys-221 carries the N6-carboxylysine modification. His-223 contacts substrate. 2 residues coordinate Ni(2+): His-250 and His-276. His-324 (proton donor) is an active-site residue. Asp-364 is a Ni(2+) binding site.

The protein belongs to the metallo-dependent hydrolases superfamily. Urease alpha subunit family. In terms of assembly, heterotrimer of UreA (gamma), UreB (beta) and UreC (alpha) subunits. Three heterotrimers associate to form the active enzyme. The cofactor is Ni cation. Post-translationally, carboxylation allows a single lysine to coordinate two nickel ions.

Its subcellular location is the cytoplasm. It catalyses the reaction urea + 2 H2O + H(+) = hydrogencarbonate + 2 NH4(+). It functions in the pathway nitrogen metabolism; urea degradation; CO(2) and NH(3) from urea (urease route): step 1/1. In Anaeromyxobacter sp. (strain Fw109-5), this protein is Urease subunit alpha.